A 192-amino-acid polypeptide reads, in one-letter code: EFPYLITPLDAITARAQEDGTTVTSSLSDSDTARAAQIAAAADVAIVFISSDSGEGYLTVEGNAGDRNDLLAWHDGDALVQAVADANENTIVAVNTVGAIITEAWIEHPNVKAVVWSGLPGQEAGNSVADILYGAYNPSGRLPYTIAKSADDYPAQVLYESSAQVPDIDYSEGLLVDYRHFDANGIEPRFEF.

Belongs to the glycosyl hydrolase 3 family.

The enzyme catalyses Hydrolysis of terminal, non-reducing beta-D-glucosyl residues with release of beta-D-glucose.. It functions in the pathway glycan metabolism; cellulose degradation. The chain is Beta-glucosidase from Schizophyllum commune (Split gill fungus).